The primary structure comprises 470 residues: E3 ubiquitin-protein ligase TRAIP (470 aa).

Residues 7 to 50 (CTICSDFFDHSRDVAAIHCGHTFHLQCLIQWFETAPSRTCPQCR) form an RING-type; atypical zinc finger. Residues 76–277 (AEFLKNELDS…RKKLMILQGT (202 aa)) adopt a coiled-coil conformation. An interaction with CYLD region spans residues 211–470 (LKEARKATGE…QPKLDTFLCQ (260 aa)). Residues 461–470 (QPKLDTFLCQ) carry the PIP-box motif.

Belongs to the TRAIP family. As to quaternary structure, interacts (via PIP-box) with PCNA. Binds TRAF1, TRAF2, TRAF3, TRAF5 and TRAF6 is part of the receptor-TRAF signaling complex. May interact with CYLD; the C-terminus interacts with CYLD, however the interaction was not detected with the full-length protein. Interacts with POLK and POLN. Interacts with UIMC1. In terms of processing, autoubiquitinated. Post-translationally, sumoylated; sumoylation is required for nuclear localization. Sumoylation increases protein stability, possibly by preventing ubiquitination. In terms of tissue distribution, detected in testis and thymus, and at lower levels in spleen.

It is found in the nucleus. It localises to the nucleoplasm. The protein resides in the nucleolus. The protein localises to the chromosome. Its subcellular location is the cytoplasm. It is found in the perinuclear region. It carries out the reaction S-ubiquitinyl-[E2 ubiquitin-conjugating enzyme]-L-cysteine + [acceptor protein]-L-lysine = [E2 ubiquitin-conjugating enzyme]-L-cysteine + N(6)-ubiquitinyl-[acceptor protein]-L-lysine.. It participates in protein modification; protein ubiquitination. Its function is as follows. E3 ubiquitin ligase required to protect genome stability in response to replication stress. Acts as a key regulator of interstrand cross-link repair, which takes place when both strands of duplex DNA are covalently tethered together, thereby blocking replication and transcription. During mitosis, controls the choice between the two pathways of replication-coupled interstrand-cross-link repair by mediating ubiquitination of MCM7 subunit of the CMG helicase complex. Short ubiquitin chains on MCM7 promote recruitment of DNA glycosylase NEIL3. If the interstrand cross-link cannot be cleaved by NEIL3, the ubiquitin chains continue to grow on MCM7, promoting the unloading of the CMG helicase complex by the VCP/p97 ATPase, enabling the Fanconi anemia DNA repair pathway. Only catalyzes ubiquitination of MCM7 when forks converge. Also involved in the repair of covalent DNA-protein cross-links (DPCs) during DNA synthesis: promotes ubiquitination of DPCs, leading to their degradation by the proteasome. Has also been proposed to play a role in promoting translesion synthesis by mediating the assembly of 'Lys-63'-linked poly-ubiquitin chains on the Y-family polymerase POLN in order to facilitate bypass of DNA lesions and preserve genomic integrity. The function in translesion synthesis is however controversial. Acts as a regulator of the spindle assembly checkpoint. Also acts as a negative regulator of innate immune signaling by inhibiting activation of NF-kappa-B mediated by TNF. Negatively regulates TLR3/4- and RIG-I-mediated IRF3 activation and subsequent IFNB1 production and cellular antiviral response by promoting 'Lys-48'-linked polyubiquitination of TNK1 leading to its proteasomal degradation. This is E3 ubiquitin-protein ligase TRAIP from Mus musculus (Mouse).